The chain runs to 380 residues: Cytochrome b (380 aa).

A run of 4 helical transmembrane segments spans residues 34 to 54 (FGSL…LLAM), 78 to 99 (WLIR…YLHI), 114 to 134 (WNTG…GYVL), and 179 to 199 (FFAL…IHLT). Heme b is bound by residues histidine 84 and histidine 98. Heme b is bound by residues histidine 183 and histidine 197. Histidine 202 is a binding site for a ubiquinone. Transmembrane regions (helical) follow at residues 227-247 (LKDI…ALFS), 289-309 (LGGV…PFLH), 321-341 (LSQL…WVGS), and 348-368 (FIII…ILFP).

Belongs to the cytochrome b family. In terms of assembly, the cytochrome bc1 complex contains 11 subunits: 3 respiratory subunits (MT-CYB, CYC1 and UQCRFS1), 2 core proteins (UQCRC1 and UQCRC2) and 6 low-molecular weight proteins (UQCRH/QCR6, UQCRB/QCR7, UQCRQ/QCR8, UQCR10/QCR9, UQCR11/QCR10 and a cleavage product of UQCRFS1). This cytochrome bc1 complex then forms a dimer. Heme b is required as a cofactor.

Its subcellular location is the mitochondrion inner membrane. Functionally, component of the ubiquinol-cytochrome c reductase complex (complex III or cytochrome b-c1 complex) that is part of the mitochondrial respiratory chain. The b-c1 complex mediates electron transfer from ubiquinol to cytochrome c. Contributes to the generation of a proton gradient across the mitochondrial membrane that is then used for ATP synthesis. The protein is Cytochrome b (MT-CYB) of Ardenna tenuirostris (Short-tailed shearwater).